The following is a 101-amino-acid chain: Small ribosomal subunit protein uS14 (101 aa).

It belongs to the universal ribosomal protein uS14 family. In terms of assembly, part of the 30S ribosomal subunit. Contacts proteins S3 and S10.

In terms of biological role, binds 16S rRNA, required for the assembly of 30S particles and may also be responsible for determining the conformation of the 16S rRNA at the A site. This is Small ribosomal subunit protein uS14 from Bartonella quintana (strain Toulouse) (Rochalimaea quintana).